The primary structure comprises 258 residues: MVFAHLNLLRKIVGIIGNFIALCLFLSPTPTFVRIVKKKSVEEYSPIPYLATLINCLVWVLYGLPTVHPDSTLVITINGTGILIEIVFLTIFFVYCGRQKQRLIISAVIAAETAFIAILAVLVLTLQHTTEKRTMSVGIVCCVFNVMMYASPLSVMKMVIKTKSVEFMPFWLSVAGFLNAGVWTIYALMPFDPFMAIPNGIGCLFGLAQLILYGAYYKSTKRIMAERENQPGYVGLSSAIARTGSEKTANTNQEPNNV.

Residues 1 to 11 lie on the Extracellular side of the membrane; sequence MVFAHLNLLRK. Residues 12–32 form a helical membrane-spanning segment; the sequence is IVGIIGNFIALCLFLSPTPTF. The region spanning 12–100 is the MtN3/slv 1 domain; it reads IVGIIGNFIA…IFFVYCGRQK (89 aa). Residues 33 to 46 are Cytoplasmic-facing; it reads VRIVKKKSVEEYSP. A helical transmembrane segment spans residues 47–67; that stretch reads IPYLATLINCLVWVLYGLPTV. The Extracellular portion of the chain corresponds to 68–73; the sequence is HPDSTL. Residues 74-94 traverse the membrane as a helical segment; the sequence is VITINGTGILIEIVFLTIFFV. The Cytoplasmic portion of the chain corresponds to 95–102; the sequence is YCGRQKQR. Residues 103 to 123 form a helical membrane-spanning segment; it reads LIISAVIAAETAFIAILAVLV. Topologically, residues 124–134 are extracellular; that stretch reads LTLQHTTEKRT. The helical transmembrane segment at 135-155 threads the bilayer; sequence MSVGIVCCVFNVMMYASPLSV. Residues 136-221 form the MtN3/slv 2 domain; the sequence is SVGIVCCVFN…LYGAYYKSTK (86 aa). Residues 156–166 are Cytoplasmic-facing; it reads MKMVIKTKSVE. Residues 167 to 187 form a helical membrane-spanning segment; that stretch reads FMPFWLSVAGFLNAGVWTIYA. Residues 188–193 lie on the Extracellular side of the membrane; it reads LMPFDP. The helical transmembrane segment at 194-214 threads the bilayer; it reads FMAIPNGIGCLFGLAQLILYG. At 215 to 258 the chain is on the cytoplasmic side; that stretch reads AYYKSTKRIMAERENQPGYVGLSSAIARTGSEKTANTNQEPNNV.

It belongs to the SWEET sugar transporter family. Forms heterooligomers with SWEET8, SWEET11, SWEET13, SWEET16 and SWEET17.

It is found in the cell membrane. Mediates both low-affinity uptake and efflux of sugar across the plasma membrane. The protein is Bidirectional sugar transporter SWEET7 of Arabidopsis thaliana (Mouse-ear cress).